Here is an 870-residue protein sequence, read N- to C-terminus: Dynamin-2 (870 aa).

Positions 28-294 (HLDLPQIAVV…LTNHIRESLP (267 aa)) constitute a Dynamin-type G domain. Residues 38 to 45 (GGQSAGKS) form a G1 motif region. GDP is bound by residues Ser-41, Gly-43, Lys-44, Ser-45, Ser-46, Arg-59, and Gly-60. The G2 motif stretch occupies residues 64 to 66 (VTR). The G3 motif stretch occupies residues 136–139 (DLPG). The segment at 205–208 (TKLD) is G4 motif. Residues Lys-206, Asp-208, and Asp-211 each contribute to the GDP site. Tyr-231 carries the post-translational modification Phosphotyrosine; by SRC. The tract at residues 235 to 238 (VNRS) is G5 motif. GDP-binding residues include Asn-236, Arg-237, and Gln-239. N6-acetyllysine is present on Lys-299. The PH domain occupies 519–625 (LVIRRGWLTI…WKASFLRAGV (107 aa)). Tyr-597 carries the post-translational modification Phosphotyrosine; by SRC. Position 598 is an N6-acetyllysine (Lys-598). The region spanning 653-744 (VETIRNLVDS…IIGDISTSTV (92 aa)) is the GED domain. The disordered stretch occupies residues 741–870 (TSTVSTPVPP…IRPAEPSLLD (130 aa)). Residue Thr-755 is modified to Phosphothreonine. A compositionally biased stretch (polar residues) spans 756–767 (WLQSASSHSPTP). Ser-764 bears the Phosphoserine; by CDK1 mark. Positions 796–806 (VPVGAAASFSA) are enriched in low complexity. Positions 826–855 (PAPPQIPSRPVRIPPGIPPGVPSRRPPAAP) are enriched in pro residues. Ser-848 carries the phosphoserine; by GSK3-alpha modification.

The protein belongs to the TRAFAC class dynamin-like GTPase superfamily. Dynamin/Fzo/YdjA family. Oligomerizes into a helical polymer that self-assembles around the vesicle membrane, when associated to the menbrane through lipid binding. Interacts with SHANK1 and SHANK2. Interacts with SNX9. Interacts (via C-terminal proline-rich domain (PRD)) with SNX18 (via SH3 domain); this interaction regulates ATG9A and ATG16L1 trafficking from recycling endosomes to sites of autophagosome formation. Interacts with SNX33 (via SH3 domain). Interacts with MYO1E (via SH3 domain). Interacts with PSTPIP1 (via SH3 domain). Interacts with CTNND2. Interacts (via C-terminal proline-rich domain (PRD)) with BIN1 (via SH3 domain); this interaction allows the recruitment of DNM2 to the membrane tubules and inhibits self-assembly-stimulated GTPase activity on the membrane. Interacts with GABARAP, GABARAPL1 and GABARAPL2. Interacts with MAP1LC3B (the lipidate and non-lipidated LC3 form); this interaction mediates recycling endosome scission leading to autophagosome release. Interacts with ITSN1. Interacts (via C-terminal proline-rich domain (PRD)) with SH3BP4 (via SH3 domain); this interaction controls the GTPase activity and is prevented by EGFR-induced tyrosine phosphorylation of either DNM2 or SH3BP4. May interact with PIK3C3. May be a component of a complex composed of RAB5A (in GDP-bound form), DYN2 and PIK3C3. Interacts with SDC4; this interaction is markedly enhanced at focal ahesion site upon induction of focal adhesions and stress-fiber formation. Interacts with ACTN1. Interacts with CTTN; this interaction stimulates the intrinsic GTPase activity of DNM2 and stabilizes the association of DNM2 and actin filaments; in addition this interaction is stimulated by ligand binding to the receptor, leading to the recruitment of the DNM2-CTTN complex to the sequestered receptor-ligand complex to its internalization. Interacts with NOSTRIN (via SH3 domain); this interaction allows the recruitment of NOS3 to dynamin-positive structures. Interacts with TUBG1; this interaction may participate in centrosome cohesion. Post-translationally, phosphorylation at Ser-848 by GSK3-alpha relieves the inhibition of BIN1 and promotes endocytosis. Phosphorylation at Ser-764 by CDK1 is greatly increased upon mitotic entry. It regulates cytokinesis downstream of calcineurin, and does not affect clathrin-mediated endocytosis. Dephosphorylated by calcineurin/PP2 during cytokinesis in a Ca(2+)- and calmodulin-dependent manner. Phosphorylated on tyrosine residues by EGFR and after activation of SRC. As to expression, widely expressed. Expressed in skeletal muscle and the peripheral nerve.

The protein localises to the cytoplasm. It localises to the cytoskeleton. It is found in the cytoplasmic vesicle. Its subcellular location is the clathrin-coated vesicle. The protein resides in the cell projection. The protein localises to the uropodium. It localises to the endosome. It is found in the microtubule organizing center. Its subcellular location is the centrosome. The protein resides in the centriole. The protein localises to the recycling endosome. It localises to the phagocytic cup. It is found in the phagosome membrane. Its subcellular location is the podosome. The protein resides in the cell junction. The protein localises to the postsynaptic density. It localises to the synapse. It is found in the synaptosome. Its subcellular location is the midbody. The protein resides in the membrane. The protein localises to the clathrin-coated pit. The catalysed reaction is GTP + H2O = GDP + phosphate + H(+). In terms of biological role, catalyzes the hydrolysis of GTP and utilizes this energy to mediate vesicle scission at plasma membrane during endocytosis and filament remodeling at many actin structures during organization of the actin cytoskeleton. Plays an important role in vesicular trafficking processes, namely clathrin-mediated endocytosis (CME), exocytic and clathrin-coated vesicle from the trans-Golgi network, and PDGF stimulated macropinocytosis. During vesicular trafficking process, associates to the membrane, through lipid binding, and self-assembles into ring-like structure through oligomerization to form a helical polymer around the vesicle membrane and leading to vesicle scission. Plays a role in organization of the actin cytoskeleton by mediating arrangement of stress fibers and actin bundles in podocytes. During organization of the actin cytoskeleton, self-assembles into ring-like structure that directly bundles actin filaments to form typical membrane tubules decorated with dynamin spiral polymers. Self-assembly increases GTPase activity and the GTP hydrolysis causes the rapid depolymerization of dynamin spiral polymers, and results in dispersion of actin bundles. Remodels, through its interaction with CTTN, bundled actin filaments in a GTPase-dependent manner and plays a role in orchestrating the global actomyosin cytoskeleton. The interaction with CTTN stabilizes the interaction of DNM2 and actin filaments and stimulates the intrinsic GTPase activity that results in actin filament-barbed ends and increases the sensitivity of filaments in bundles to the actin depolymerizing factor, CFL1. Plays a role in the autophagy process, by participating in the formation of ATG9A vesicles destined for the autophagosomes through its interaction with SNX18, by mediating recycling endosome scission leading to autophagosome release through MAP1LC3B interaction. Also regulates maturation of apoptotic cell corpse-containing phagosomes by recruiting PIK3C3 to the phagosome membrane. Also plays a role in cytokinesis. May participate in centrosome cohesion through its interaction with TUBG1. Plays a role in the regulation of neuron morphology, axon growth and formation of neuronal growth cones. Involved in membrane tubulation. The protein is Dynamin-2 of Homo sapiens (Human).